The following is a 118-amino-acid chain: Small ribosomal subunit protein uS13 (118 aa).

Residues 95–118 (LPLRGQRTRTNARTRKGPRKAIKK) are disordered.

It belongs to the universal ribosomal protein uS13 family. In terms of assembly, part of the 30S ribosomal subunit. Forms a loose heterodimer with protein S19. Forms two bridges to the 50S subunit in the 70S ribosome.

Located at the top of the head of the 30S subunit, it contacts several helices of the 16S rRNA. In the 70S ribosome it contacts the 23S rRNA (bridge B1a) and protein L5 of the 50S subunit (bridge B1b), connecting the 2 subunits; these bridges are implicated in subunit movement. Contacts the tRNAs in the A and P-sites. The polypeptide is Small ribosomal subunit protein uS13 (Xylella fastidiosa (strain 9a5c)).